Reading from the N-terminus, the 259-residue chain is Protein unc-50 homolog (259 aa).

An N-acetylmethionine modification is found at Met1. Positions Met1 to Leu17 are enriched in polar residues. Residues Met1 to Ala22 form a disordered region. At Met1 to Pro82 the chain is on the cytoplasmic side. Ser6 bears the Phosphoserine mark. Residues Ala83–Leu103 traverse the membrane as a helical segment. Residues Asp104–Leu115 are Lumenal-facing. Residues Trp116–Ile136 traverse the membrane as a helical segment. The Cytoplasmic portion of the chain corresponds to Ser137–Ala163. A helical transmembrane segment spans residues Phe164 to Leu184. At Thr185–Thr187 the chain is on the lumenal side. A helical transmembrane segment spans residues Phe188–Val208. Residues Thr209–Thr222 lie on the Cytoplasmic side of the membrane. The helical transmembrane segment at Val223–Gly243 threads the bilayer. Residues Trp244–Lys259 lie on the Lumenal side of the membrane.

It belongs to the unc-50 family.

The protein localises to the nucleus inner membrane. Its subcellular location is the golgi apparatus membrane. Functionally, involved in the cell surface expression of neuronal nicotinic receptors. Binds RNA. The sequence is that of Protein unc-50 homolog (UNC50) from Bos taurus (Bovine).